A 243-amino-acid polypeptide reads, in one-letter code: Cysteine-rich secretory protein 2 (243 aa).

An N-terminal signal peptide occupies residues 1-21; that stretch reads MALLPVLFLVTVLLPSLPAEG. One can recognise an SCP domain in the interval 41 to 169; that stretch reads VNKHNELRKA…SLKYYYVCQY (129 aa). 5 disulfide bridges follow: Cys189-Cys196, Cys192-Cys201, Cys205-Cys238, Cys214-Cys232, and Cys223-Cys236. In terms of domain architecture, ShKT spans 205 to 238; that stretch reads CQYQDLLSNCDSLKNTAGCEHELLKEKCKATCLC.

The protein belongs to the CRISP family. As to quaternary structure, interacts with NSUN4 isoform 3. Testis and epididymis.

Its subcellular location is the secreted. Functionally, may regulate some ion channels' activity and thereby regulate calcium fluxes during sperm capacitation. In Homo sapiens (Human), this protein is Cysteine-rich secretory protein 2 (CRISP2).